A 447-amino-acid polypeptide reads, in one-letter code: UDP-N-acetylmuramoylalanine--D-glutamate ligase (447 aa).

ATP is bound at residue 112 to 118 (GTNGKST).

This sequence belongs to the MurCDEF family.

It is found in the cytoplasm. The enzyme catalyses UDP-N-acetyl-alpha-D-muramoyl-L-alanine + D-glutamate + ATP = UDP-N-acetyl-alpha-D-muramoyl-L-alanyl-D-glutamate + ADP + phosphate + H(+). It functions in the pathway cell wall biogenesis; peptidoglycan biosynthesis. In terms of biological role, cell wall formation. Catalyzes the addition of glutamate to the nucleotide precursor UDP-N-acetylmuramoyl-L-alanine (UMA). The sequence is that of UDP-N-acetylmuramoylalanine--D-glutamate ligase from Legionella pneumophila subsp. pneumophila (strain Philadelphia 1 / ATCC 33152 / DSM 7513).